We begin with the raw amino-acid sequence, 301 residues long: B3 domain-containing protein At5g18090 (301 aa).

Positions 18-113 (FFKILRSADL…CFTVDIYQID (96 aa)) form a DNA-binding region, TF-B3 1. Disordered stretches follow at residues 123–142 (SATIASSSGRNKREQRNNIY) and 153–194 (SWSE…KMKV). The span at 133-142 (NKREQRNNIY) shows a compositional bias: basic and acidic residues. Positions 209–301 (VPEFTLTIKK…PTEMLVRVSK (93 aa)) form a DNA-binding region, TF-B3 2.

The protein localises to the nucleus. The chain is B3 domain-containing protein At5g18090 from Arabidopsis thaliana (Mouse-ear cress).